The primary structure comprises 293 residues: Elongation factor Ts (293 aa).

The tract at residues 79–82 (TDFV) is involved in Mg(2+) ion dislocation from EF-Tu.

Belongs to the EF-Ts family.

It localises to the cytoplasm. Functionally, associates with the EF-Tu.GDP complex and induces the exchange of GDP to GTP. It remains bound to the aminoacyl-tRNA.EF-Tu.GTP complex up to the GTP hydrolysis stage on the ribosome. The polypeptide is Elongation factor Ts (tsf) (Halalkalibacterium halodurans (strain ATCC BAA-125 / DSM 18197 / FERM 7344 / JCM 9153 / C-125) (Bacillus halodurans)).